A 430-amino-acid polypeptide reads, in one-letter code: Endochitinase 46 (430 aa).

The signal sequence occupies residues 1–22; it reads MLSFLGKSVALLAALQATLSSA. Residues 23–35 constitute a propeptide that is removed on maturation; that stretch reads SPLATEERSIEKR. One can recognise a GH18 domain in the interval 39-408; it reads YANSVYFTNW…GTSHRALGGL (370 aa). Residues 103–104 and 130–133 each bind chitin; these read GT and GGWT. Glu172 functions as the Proton donor in the catalytic mechanism. Tyr173 contacts chitin. An N-linked (GlcNAc...) asparagine glycan is attached at Asn219. Chitin contacts are provided by residues 238–241 and Trp385; that span reads MAYD.

It belongs to the glycosyl hydrolase 18 family. Chitinase class V subfamily.

It localises to the secreted. The enzyme catalyses Random endo-hydrolysis of N-acetyl-beta-D-glucosaminide (1-&gt;4)-beta-linkages in chitin and chitodextrins.. Its function is as follows. Secreted chitinase involved in the degradation of chitin, a component of the cell walls of fungi and exoskeletal elements of some animals (including worms and arthropods). Plays a morphogenetic role during apical growth, cell division and differentiation (cell wall morphogenesis). Also acts as an antifungal agent. Involved in the degradation and further assimilation of phytopathogenic fungi, namely mycoparasitism, the major mechanism accounting for the antagonistic activity against phytopathogenic fungi displayed by Trichoderma. This chain is Endochitinase 46 (chit46), found in Trichoderma harzianum (Hypocrea lixii).